The primary structure comprises 199 residues: Dephospho-CoA kinase (199 aa).

The DPCK domain occupies 11-199; that stretch reads RIGLTGGIAS…DLHDQLDALL (189 aa). Residue 19-24 participates in ATP binding; that stretch reads ASGKSS.

It belongs to the CoaE family.

The protein resides in the cytoplasm. It carries out the reaction 3'-dephospho-CoA + ATP = ADP + CoA + H(+). The protein operates within cofactor biosynthesis; coenzyme A biosynthesis; CoA from (R)-pantothenate: step 5/5. Functionally, catalyzes the phosphorylation of the 3'-hydroxyl group of dephosphocoenzyme A to form coenzyme A. The chain is Dephospho-CoA kinase from Synechococcus sp. (strain CC9902).